The primary structure comprises 426 residues: Dihydroorotase (426 aa).

Residues H58 and H60 each contribute to the Zn(2+) site. Substrate contacts are provided by residues 60 to 62 (HLR) and N92. D150, H177, and H230 together coordinate Zn(2+). Residue N276 participates in substrate binding. D303 contributes to the Zn(2+) binding site. D303 is an active-site residue. Substrate is bound by residues H307 and 321 to 322 (FG).

It belongs to the metallo-dependent hydrolases superfamily. DHOase family. Class I DHOase subfamily. Zn(2+) serves as cofactor.

The enzyme catalyses (S)-dihydroorotate + H2O = N-carbamoyl-L-aspartate + H(+). It participates in pyrimidine metabolism; UMP biosynthesis via de novo pathway; (S)-dihydroorotate from bicarbonate: step 3/3. Catalyzes the reversible cyclization of carbamoyl aspartate to dihydroorotate. The chain is Dihydroorotase from Listeria monocytogenes serotype 4b (strain F2365).